The primary structure comprises 191 residues: Adenine phosphoribosyltransferase (191 aa).

The protein belongs to the purine/pyrimidine phosphoribosyltransferase family. In terms of assembly, homodimer.

The protein localises to the cytoplasm. It carries out the reaction AMP + diphosphate = 5-phospho-alpha-D-ribose 1-diphosphate + adenine. The protein operates within purine metabolism; AMP biosynthesis via salvage pathway; AMP from adenine: step 1/1. Catalyzes a salvage reaction resulting in the formation of AMP, that is energically less costly than de novo synthesis. The sequence is that of Adenine phosphoribosyltransferase from Bordetella bronchiseptica (strain ATCC BAA-588 / NCTC 13252 / RB50) (Alcaligenes bronchisepticus).